The sequence spans 384 residues: 8-amino-7-oxononanoate synthase (384 aa).

Residue Arg21 participates in substrate binding. 108 to 109 (GF) is a binding site for pyridoxal 5'-phosphate. A substrate-binding site is contributed by His133. 3 residues coordinate pyridoxal 5'-phosphate: Ser179, His207, and Thr233. Lys236 is subject to N6-(pyridoxal phosphate)lysine. Thr352 is a binding site for substrate.

It belongs to the class-II pyridoxal-phosphate-dependent aminotransferase family. BioF subfamily. In terms of assembly, homodimer. It depends on pyridoxal 5'-phosphate as a cofactor.

It catalyses the reaction 6-carboxyhexanoyl-[ACP] + L-alanine + H(+) = (8S)-8-amino-7-oxononanoate + holo-[ACP] + CO2. It functions in the pathway cofactor biosynthesis; biotin biosynthesis. Catalyzes the decarboxylative condensation of pimeloyl-[acyl-carrier protein] and L-alanine to produce 8-amino-7-oxononanoate (AON), [acyl-carrier protein], and carbon dioxide. This Escherichia coli O9:H4 (strain HS) protein is 8-amino-7-oxononanoate synthase.